The following is a 167-amino-acid chain: DNA-directed RNA polymerase II subunit rpb-9 (167 aa).

The disordered stretch occupies residues 28-49; that stretch reads DDMYDQNGASPAPSQNEKPGKS. Residues 34-44 show a composition bias toward polar residues; sequence NGASPAPSQNE. Positions 59, 62, 81, 84, 128, 131, 156, and 161 each coordinate Zn(2+). The segment at 59 to 84 adopts a C4-type zinc-finger fold; that stretch reads CPECNNMLYPREDKESRVLMYSCRNC. Residues 124-166 form a TFIIS-type zinc finger; that stretch reads EEHQCPVCGKSKAVFFQAQTKKAEEEMRLYYVCASQDCQHRWT.

Belongs to the archaeal RpoM/eukaryotic RPA12/RPB9/RPC11 RNA polymerase family. Component of the RNA polymerase II (Pol II) complex consisting of 12 subunits. In terms of tissue distribution, expressed in the soma and in the germline.

It is found in the nucleus. The protein localises to the nucleolus. In terms of biological role, DNA-dependent RNA polymerase catalyzes the transcription of DNA into RNA using the four ribonucleoside triphosphates as substrates. Component of RNA polymerase II which synthesizes mRNA precursors and many functional non-coding RNAs. Pol II is the central component of the basal RNA polymerase II transcription machinery. It is composed of mobile elements that move relative to each other. RPB9 is part of the upper jaw surrounding the central large cleft and thought to grab the incoming DNA template. Recruits ints-6, a component of the Integrator complex to PIWI-interacting RNA (piRNA) genes, to mediate Integrator complex-dependent cleavage of 3' ends of nascent transcripts upon RNA Pol II backtracking to terminate transcription and generate piRNA precursors. Promotes the biogenesis of secondary 22G-siRNAs (a class of 22 nucleotide siRNAs that possess a triphosphorylated guanine residue at the 5'-end). Involved in gene silencing mediated by a class of 21 nucleotide piRNAs that possess a uracil residue at the 5'-end (also called 21U-RNAs) and guide the Piwi protein prg-1 to its DNA targets for silencing. Plays a role in small RNA-directed transgenerational epigenetic inheritance (also called RNAe) over several generations. Not required for the transgenerational inheritance of exogenous small interfering RNAs (RNAi). May play a role in the silencing of the DNA transposable elements from the DNA transposon families, Chapaev-2 and CEMUDR1. The polypeptide is DNA-directed RNA polymerase II subunit rpb-9 (Caenorhabditis elegans).